Consider the following 227-residue polypeptide: Uridylate kinase (227 aa).

Position 11–12 (11–12) interacts with ATP; the sequence is GS. Glycine 45 is a binding site for UMP. ATP-binding residues include glycine 46 and arginine 50. Residues aspartate 67 and 114-120 each bind UMP; that span reads TEPGHTT. Residues threonine 140, tyrosine 146, and aspartate 149 each coordinate ATP.

Belongs to the UMP kinase family. As to quaternary structure, homohexamer.

The protein resides in the cytoplasm. It carries out the reaction UMP + ATP = UDP + ADP. It functions in the pathway pyrimidine metabolism; CTP biosynthesis via de novo pathway; UDP from UMP (UMPK route): step 1/1. Inhibited by UTP. Its function is as follows. Catalyzes the reversible phosphorylation of UMP to UDP. In Thermoplasma volcanium (strain ATCC 51530 / DSM 4299 / JCM 9571 / NBRC 15438 / GSS1), this protein is Uridylate kinase.